The sequence spans 329 residues: Phosphate acyltransferase (329 aa).

The protein belongs to the PlsX family. In terms of assembly, homodimer. Probably interacts with PlsY.

It is found in the cytoplasm. It carries out the reaction a fatty acyl-[ACP] + phosphate = an acyl phosphate + holo-[ACP]. The protein operates within lipid metabolism; phospholipid metabolism. Catalyzes the reversible formation of acyl-phosphate (acyl-PO(4)) from acyl-[acyl-carrier-protein] (acyl-ACP). This enzyme utilizes acyl-ACP as fatty acyl donor, but not acyl-CoA. This is Phosphate acyltransferase from Anoxybacillus flavithermus (strain DSM 21510 / WK1).